The chain runs to 183 residues: 16 kDa gamma-zein (183 aa).

The signal sequence occupies residues Met1–Ser19.

In terms of assembly, interacts with OP10 (via N-terminus).

The protein localises to the vacuole. Its subcellular location is the aleurone grain. Functionally, zeins are major seed storage proteins. The sequence is that of 16 kDa gamma-zein from Zea mays (Maize).